Consider the following 1789-residue polypeptide: Protein TIC 214 (1789 aa).

The next 6 membrane-spanning stretches (helical) occupy residues 19–39 (IINSVVVVGLYYGFLTTFSIG), 68–88 (FIAGQLMMFISIYYAPLHLAL), 91–111 (PHTITVLALPYLLFHFFWNNH), 133–153 (VFLNNLIFQLFNHFILPSSML), 176–196 (VGWLIGHILFMKWVGLVLVWI), and 227–247 (IFSILLFITCVYYLGRIPSPI).

It belongs to the TIC214 family. As to quaternary structure, part of the Tic complex.

It localises to the plastid. The protein localises to the chloroplast inner membrane. Involved in protein precursor import into chloroplasts. May be part of an intermediate translocation complex acting as a protein-conducting channel at the inner envelope. In Capsella bursa-pastoris (Shepherd's purse), this protein is Protein TIC 214.